The following is a 144-amino-acid chain: MRQTTFVKHQEVKQKWFVIDAESKILGRLAAFVASRLRGKHYPHFTPNVDMGDKIIIINAEKILLTAKKEDQKLYYNHSGYPGGLRVRTAREMRAKKPIALLERAIYGMIPHTKLGDKQRKNLYVYSGSEHPHLGQNPEKLEVK.

It belongs to the universal ribosomal protein uL13 family. Part of the 50S ribosomal subunit.

Functionally, this protein is one of the early assembly proteins of the 50S ribosomal subunit, although it is not seen to bind rRNA by itself. It is important during the early stages of 50S assembly. The polypeptide is Large ribosomal subunit protein uL13 (Mesomycoplasma hyopneumoniae (strain 232) (Mycoplasma hyopneumoniae)).